A 555-amino-acid polypeptide reads, in one-letter code: Hydroxylamine reductase (555 aa).

Cys5, Cys8, Cys17, and Cys23 together coordinate [4Fe-4S] cluster. Hybrid [4Fe-2O-2S] cluster contacts are provided by His248, Glu272, Cys316, Cys408, Cys436, Cys461, Glu496, and Lys498. Cys408 carries the cysteine persulfide modification.

The protein belongs to the HCP family. It depends on [4Fe-4S] cluster as a cofactor. The cofactor is hybrid [4Fe-2O-2S] cluster.

The protein localises to the cytoplasm. The enzyme catalyses A + NH4(+) + H2O = hydroxylamine + AH2 + H(+). In terms of biological role, catalyzes the reduction of hydroxylamine to form NH(3) and H(2)O. The chain is Hydroxylamine reductase from Natranaerobius thermophilus (strain ATCC BAA-1301 / DSM 18059 / JW/NM-WN-LF).